Reading from the N-terminus, the 113-residue chain is ATP-dependent Clp protease adapter protein ClpS (113 aa).

The segment covering 1 to 11 (MTRPTIPPGPP) has biased composition (pro residues). Disordered regions lie at residues 1 to 24 (MTRP…ERTE) and 92 to 113 (TAHA…SEGE).

It belongs to the ClpS family. In terms of assembly, binds to the N-terminal domain of the chaperone ClpA.

Functionally, involved in the modulation of the specificity of the ClpAP-mediated ATP-dependent protein degradation. The chain is ATP-dependent Clp protease adapter protein ClpS from Deinococcus radiodurans (strain ATCC 13939 / DSM 20539 / JCM 16871 / CCUG 27074 / LMG 4051 / NBRC 15346 / NCIMB 9279 / VKM B-1422 / R1).